Consider the following 1231-residue polypeptide: S-layer protein A (1231 aa).

A signal peptide spans 1–35 (MNKTLGLILTSVFLLSTLGIITGFVIPTQAANSND).

It belongs to the Sulfolobales SlaA family. In terms of assembly, the mushroom-shaped unit cells of the Sulfolobales' S-layers may consist of three SlaB subunits and six SlaA subunits.

It is found in the secreted. The protein localises to the cell wall. It localises to the S-layer. Its function is as follows. S-layer large protein. May form the highly ordered outer sheath. This chain is S-layer protein A, found in Saccharolobus solfataricus (strain ATCC 35092 / DSM 1617 / JCM 11322 / P2) (Sulfolobus solfataricus).